The primary structure comprises 308 residues: MALFPDLVPELKAAMPQLRGRLLGNEPLAPLTWFRVGGPAQVLFTPADADDLGYFLAALPRDIDVTVVGVGSNLIVRDGGLPGVVIRLGGRGFGETGTDGDVVSAGSAALDKRVAEAAAAAGLGGLEFYHGIPGTIGGALRMNAGANGRETKDVLIDASAIARDGTLHRLSNAEMGFSYRHSGADPALIFTSARFRGEPMDRAAIRARMDEVQRHRETAQPVREKTGGSTFKNPPGHSAWKLIDAAGCRGLRVGGAQVSEMHCNFLINTGSATAQDIETLGDTVRARVKEHCGIELQWEIKRIGRALD.

The region spanning 35–200 (RVGGPAQVLF…TSARFRGEPM (166 aa)) is the FAD-binding PCMH-type domain. Arg-180 is an active-site residue. Over residues 211–226 (EVQRHRETAQPVREKT) the composition is skewed to basic and acidic residues. Positions 211 to 236 (EVQRHRETAQPVREKTGGSTFKNPPG) are disordered. Ser-229 functions as the Proton donor in the catalytic mechanism. Glu-299 is a catalytic residue.

It belongs to the MurB family. FAD serves as cofactor.

The protein resides in the cytoplasm. It catalyses the reaction UDP-N-acetyl-alpha-D-muramate + NADP(+) = UDP-N-acetyl-3-O-(1-carboxyvinyl)-alpha-D-glucosamine + NADPH + H(+). It functions in the pathway cell wall biogenesis; peptidoglycan biosynthesis. Its function is as follows. Cell wall formation. This Rhodopseudomonas palustris (strain BisB18) protein is UDP-N-acetylenolpyruvoylglucosamine reductase.